The sequence spans 470 residues: 3-isopropylmalate dehydratase large subunit (470 aa).

Residues 294–307 show a composition bias toward polar residues; the sequence is PDQNTGISGSTPNP. Positions 294–313 are disordered; it reads PDQNTGISGSTPNPSDAADD. [4Fe-4S] cluster is bound by residues cysteine 347, cysteine 407, and cysteine 410.

Belongs to the aconitase/IPM isomerase family. LeuC type 1 subfamily. Heterodimer of LeuC and LeuD. Requires [4Fe-4S] cluster as cofactor.

The catalysed reaction is (2R,3S)-3-isopropylmalate = (2S)-2-isopropylmalate. It participates in amino-acid biosynthesis; L-leucine biosynthesis; L-leucine from 3-methyl-2-oxobutanoate: step 2/4. In terms of biological role, catalyzes the isomerization between 2-isopropylmalate and 3-isopropylmalate, via the formation of 2-isopropylmaleate. The polypeptide is 3-isopropylmalate dehydratase large subunit (Akkermansia muciniphila (strain ATCC BAA-835 / DSM 22959 / JCM 33894 / BCRC 81048 / CCUG 64013 / CIP 107961 / Muc)).